The following is a 217-amino-acid chain: External core antigen (217 aa).

A signal peptide spans 1–19; sequence MYLFHLCLVFACVPCPTFQ. The tract at residues 26–28 is HBEAG; it reads GWL. Residues 180–217 are disordered; the sequence is RRGGARASRSPRRRTPSPRRRRSQSPRRRRSQSPSANC. Basic residues predominate over residues 188–210; that stretch reads RSPRRRTPSPRRRRSQSPRRRRS. The 1; half-length repeat unit spans residues 189-195; the sequence is SPRRRTP. The segment at 189–211 is 3 X 8 AA repeats of S-P-R-R-R-R-S-Q; that stretch reads SPRRRTPSPRRRRSQSPRRRRSQ. The propeptide occupies 189–217; it reads SPRRRTPSPRRRRSQSPRRRRSQSPSANC. 2 repeat units span residues 196–203 and 204–211.

The protein belongs to the orthohepadnavirus precore antigen family. As to quaternary structure, homodimerizes. In terms of processing, phosphorylated. Post-translationally, cleaved by host furin.

It is found in the secreted. The protein resides in the host nucleus. May regulate immune response to the intracellular capsid in acting as a T-cell tolerogen, by having an immunoregulatory effect which prevents destruction of infected cells by cytotoxic T-cells. This immune regulation may predispose to chronicity during perinatal infections and prevent severe liver injury during adult infections. The chain is External core antigen from Marmota monax (Woodchuck).